The chain runs to 311 residues: Ribonuclease HIII (311 aa).

The region spanning 95–311 (MSIVGSDEVG…NTEKAFRLLK (217 aa)) is the RNase H type-2 domain. D101, E102, and D206 together coordinate a divalent metal cation.

The protein belongs to the RNase HII family. RnhC subfamily. Requires Mn(2+) as cofactor. Mg(2+) is required as a cofactor.

It localises to the cytoplasm. The enzyme catalyses Endonucleolytic cleavage to 5'-phosphomonoester.. In terms of biological role, endonuclease that specifically degrades the RNA of RNA-DNA hybrids. The chain is Ribonuclease HIII from Bacillus anthracis (strain A0248).